The following is a 443-amino-acid chain: MVKYEDKISLYDAKGNLVAENVPLEAISPLYNPTIKSMLKNIKRTVAVNLADIENTLATGSIGGKGCKVPGRTLDLSVVSNAQAIADEVEKILKVSKDDDTAIKLINGGKQMAVQVPSERLEVAAEYSVSMLATAMALKEAIIKTFNVDMFEGSTVHASIMGNYPQVMDYAGGNIASLLGAPSNLEGLGYALRNIPVNHAVATTKKNMMNAIAFSSVMEQTATFEMGDAIGSFERQHLLGLAYQGLNADNLVIEFIKANGKGTVGTVVQSVVERALADGVIVVDKTMGSGFNMYKPADVNKWNAYAAAGLVAAAAVSCGAARAAQNIASVILYYNDILEYETGLPGVDYGRSMGTAVGFSFFSHSIYGGGGPGIFNGNHVVTRHSKGFAIPPVCAAMCADAGTQMFSPEHTSALVGAVYSAFDEFREPMKYVIERALNIKDKL.

Tyr367 contacts coenzyme M. Gly369 contacts coenzyme B.

It belongs to the methyl-coenzyme M reductase beta subunit family. In terms of assembly, MCR is a hexamer of two alpha, two beta, and two gamma chains, forming a dimer of heterotrimers. Requires coenzyme F430 as cofactor.

It localises to the cytoplasm. The enzyme catalyses coenzyme B + methyl-coenzyme M = methane + coenzyme M-coenzyme B heterodisulfide. The protein operates within one-carbon metabolism; methyl-coenzyme M reduction; methane from methyl-coenzyme M: step 1/1. Component of the methyl-coenzyme M reductase (MCR) I that catalyzes the reductive cleavage of methyl-coenzyme M (CoM-S-CH3 or 2-(methylthio)ethanesulfonate) using coenzyme B (CoB or 7-mercaptoheptanoylthreonine phosphate) as reductant which results in the production of methane and the mixed heterodisulfide of CoB and CoM (CoM-S-S-CoB). This is the final step in methanogenesis. The protein is Methyl-coenzyme M reductase subunit beta (mcrB) of Methanococcus vannielii.